We begin with the raw amino-acid sequence, 214 residues long: Large ribosomal subunit protein uL3 (214 aa).

Residues 129–155 form a disordered region; that stretch reads FGRGPMSHGSKNHRRPGSVGAGTTPGR.

Belongs to the universal ribosomal protein uL3 family. Part of the 50S ribosomal subunit. Forms a cluster with proteins L14 and L19.

One of the primary rRNA binding proteins, it binds directly near the 3'-end of the 23S rRNA, where it nucleates assembly of the 50S subunit. The polypeptide is Large ribosomal subunit protein uL3 (Synechococcus sp. (strain JA-3-3Ab) (Cyanobacteria bacterium Yellowstone A-Prime)).